The primary structure comprises 148 residues: uncharacterized protein (148 aa).

The next 2 membrane-spanning stretches (helical) occupy residues I16–L36 and L41–F61.

To M.jannaschii MJ0696.

It localises to the cell membrane. This is an uncharacterized protein from Methanocaldococcus jannaschii (strain ATCC 43067 / DSM 2661 / JAL-1 / JCM 10045 / NBRC 100440) (Methanococcus jannaschii).